The sequence spans 250 residues: 3-deoxy-manno-octulosonate cytidylyltransferase (250 aa).

It belongs to the KdsB family.

The protein resides in the cytoplasm. It catalyses the reaction 3-deoxy-alpha-D-manno-oct-2-ulosonate + CTP = CMP-3-deoxy-beta-D-manno-octulosonate + diphosphate. It participates in nucleotide-sugar biosynthesis; CMP-3-deoxy-D-manno-octulosonate biosynthesis; CMP-3-deoxy-D-manno-octulosonate from 3-deoxy-D-manno-octulosonate and CTP: step 1/1. Its pathway is bacterial outer membrane biogenesis; lipopolysaccharide biosynthesis. Functionally, activates KDO (a required 8-carbon sugar) for incorporation into bacterial lipopolysaccharide in Gram-negative bacteria. This is 3-deoxy-manno-octulosonate cytidylyltransferase from Cytophaga hutchinsonii (strain ATCC 33406 / DSM 1761 / CIP 103989 / NBRC 15051 / NCIMB 9469 / D465).